The following is a 46-amino-acid chain: U-myrmeciitoxin(01)-Mg6a (46 aa).

Residues 1 to 20 (MNLKTFCFFLLGIFVTLTVT) form the signal peptide. The propeptide occupies 21–33 (VIPIANADAEADT).

Contains 1 disulfide bond. In terms of tissue distribution, expressed by the venom gland.

Its subcellular location is the secreted. The polypeptide is U-myrmeciitoxin(01)-Mg6a (Myrmecia gulosa (Red bulldog ant)).